A 308-amino-acid chain; its full sequence is Cilia- and flagella-associated protein 73 (308 aa).

2 coiled-coil regions span residues 34 to 143 (RLLE…LEPC) and 175 to 233 (AALR…WESK).

The protein belongs to the CFAP73 family.

The protein localises to the cytoplasm. It localises to the cytoskeleton. The protein resides in the cilium axoneme. Its function is as follows. May play a role in ciliary/flagellar motility by regulating the assembly and the activity of axonemal inner dynein arm. In Homo sapiens (Human), this protein is Cilia- and flagella-associated protein 73.